The following is a 254-amino-acid chain: NH(3)-dependent NAD(+) synthetase (254 aa).

Residue 32-39 participates in ATP binding; the sequence is GISGGVDS. Residue D38 participates in Mg(2+) binding. Position 113 (R113) interacts with deamido-NAD(+). T133 provides a ligand contact to ATP. E138 contacts Mg(2+). K146 and D153 together coordinate deamido-NAD(+). Positions 162 and 184 each coordinate ATP. 244 to 245 lines the deamido-NAD(+) pocket; that stretch reads HK.

It belongs to the NAD synthetase family. As to quaternary structure, homodimer.

The enzyme catalyses deamido-NAD(+) + NH4(+) + ATP = AMP + diphosphate + NAD(+) + H(+). The protein operates within cofactor biosynthesis; NAD(+) biosynthesis; NAD(+) from deamido-NAD(+) (ammonia route): step 1/1. Catalyzes the ATP-dependent amidation of deamido-NAD to form NAD. Uses ammonia as a nitrogen source. This Thermococcus sibiricus (strain DSM 12597 / MM 739) protein is NH(3)-dependent NAD(+) synthetase.